Here is a 340-residue protein sequence, read N- to C-terminus: Ava biosynthesis cluster protein G (340 aa).

Helical transmembrane passes span tryptophan 15–asparagine 35, phenylalanine 81–valine 101, alanine 118–phenylalanine 138, and leucine 148–isoleucine 168. Asparagine 171 carries an N-linked (GlcNAc...) asparagine glycan. Helical transmembrane passes span phenylalanine 219 to phenylalanine 239 and serine 315 to isoleucine 335.

The protein resides in the membrane. It participates in secondary metabolite biosynthesis. Its function is as follows. Part of the cluster that mediates the biosynthesis of a highly modified cyclo-arginine-tryptophan dipeptide (cRW). The first step of the pathway is perfornmed by the arginine-containing cyclodipeptide synthase (RCPDS) avaA that acts as the scaffold-generating enzyme and is responsible for formation of the cyclo-Arg-Trp (cRW) diketopiperazine. AvaB then acts as a multifunctional flavoenzyme that is responsible for generating the cyclo-Arg-formylkynurenine DKP, which can be deformylated by avaC. AvaB then further catalyzes an additional N-oxidation followed by cyclization and dehydration. The next step is an N-acetylation of the guanidine group catalyzed by the arginine N-acetyltransferase avaD. The roles of the additional enzymes identified within the ava cluster still have to be determined. This chain is Ava biosynthesis cluster protein G, found in Aspergillus versicolor.